Reading from the N-terminus, the 344-residue chain is Uroporphyrinogen decarboxylase (344 aa).

Substrate is bound by residues 23-27 (RQAGR), Asp73, Tyr149, Thr204, and His321.

Belongs to the uroporphyrinogen decarboxylase family. Homodimer.

Its subcellular location is the cytoplasm. It catalyses the reaction uroporphyrinogen III + 4 H(+) = coproporphyrinogen III + 4 CO2. It participates in porphyrin-containing compound metabolism; protoporphyrin-IX biosynthesis; coproporphyrinogen-III from 5-aminolevulinate: step 4/4. Catalyzes the decarboxylation of four acetate groups of uroporphyrinogen-III to yield coproporphyrinogen-III. The sequence is that of Uroporphyrinogen decarboxylase from Francisella tularensis subsp. tularensis (strain FSC 198).